A 1154-amino-acid chain; its full sequence is Voltage-gated inwardly rectifying potassium channel KCNH2 (1154 aa).

Residues 1–403 are Cytoplasmic-facing; the sequence is MPVRRGHVAP…RIHRWTILHY (403 aa). The PAS domain maps to 41 to 70; the sequence is VIYCNDGFCELCGYSRAEVMQRPCTCDFLH. A PAC domain is found at 92-144; the sequence is RKVEIAFYRKDGSCFLCLVDVVPVKNEDGAVIMFILNFEVVMEKDMVGSPARD. The segment at 233 to 312 is disordered; it reads ALVGSGSPPA…ASTGAMHPLR (80 aa). Ser-239 carries the post-translational modification Phosphoserine. Residues 258 to 269 are compositionally biased toward polar residues; sequence PDGSGSSCSLAR. Residues Ser-283, Ser-284, Ser-320, and Ser-351 each carry the phosphoserine modification. Residues 404 to 424 traverse the membrane as a helical segment; the sequence is SPFKAVWDWLILLLVIYTAVF. The Extracellular portion of the chain corresponds to 425–450; that stretch reads TPYSAAFLLKETEEGSQAPDCGYACQ. A helical membrane pass occupies residues 451–471; the sequence is PLAVVDLIVDIMFIVDILINF. The Cytoplasmic segment spans residues 472–495; it reads RTTYVNANEEVVSHPGRIAVHYFK. Residues 496–516 form a helical membrane-spanning segment; sequence GWFLIDMVAAIPFDLLIFGSG. The Extracellular segment spans residues 517–520; the sequence is SEEL. A helical; Voltage-sensor membrane pass occupies residues 521–541; it reads IGLLKTARLLRLVRVARKLDR. Over 542–547 the chain is Cytoplasmic; it reads YSEYGA. A helical transmembrane segment spans residues 548 to 568; that stretch reads AVLFLLMCTFALIAHWLACIW. Residues 569–611 are Extracellular-facing; it reads YAIGNMEQPNMDSHIGWLHNLGDQIGKPYNSSGLGGPSIKDKY. The segment at residues 612–632 is an intramembrane region (pore-forming); that stretch reads VTALYFTFSSLTSVGFGNVSP. The Selectivity filter signature appears at 624 to 629; that stretch reads SVGFGN. Topologically, residues 633–638 are extracellular; sequence NTNSEK. The chain crosses the membrane as a helical span at residues 639-659; sequence IFSICVMLIGSLMYASIFGNV. Residues 660-1154 lie on the Cytoplasmic side of the membrane; the sequence is SAIIQRLYSG…LHRHGSDPGS (495 aa). Residues 742–842 form a cNMP-binding domain region; that stretch reads PFRGATKGCL…IHRDDLLEVL (101 aa). The tract at residues 870–985 is disordered; it reads GSPGSTELEG…DVEKSSDTCN (116 aa). Ser-871 and Ser-874 each carry phosphoserine. Over residues 883–892 the composition is skewed to basic residues; that stretch reads RQRKRKLSFR. Over residues 916 to 927 the composition is skewed to gly residues; that stretch reads GPSGRGQQGGPW. Low complexity predominate over residues 928 to 939; it reads GESLSSGPSSPE. At Arg-1014 the chain carries Omega-N-methylarginine. Positions 1037 to 1064 form a coiled coil; it reads RGDVESRLDALQRQLNRLETRLSADMAT. A disordered region spans residues 1125–1154; that stretch reads DGPARRLSLPGQLGALTSQPLHRHGSDPGS. Position 1132 is a phosphoserine (Ser-1132).

The protein belongs to the potassium channel family. H (Eag) (TC 1.A.1.20) subfamily. Kv11.1/KCNH2 sub-subfamily. As to quaternary structure, the potassium channel is probably composed of a homo- or heterotetrameric complex of pore-forming alpha subunits that can associate with modulating beta subunits. Interacts with DNAJB12 and DNAJB14; chaperones DNAJB12 and DNAJB14 promote tetramerization. Heteromultimer with KCNH6/ERG2 and KCNH7/ERG3. Interacts with ALG10B. Forms a stable complex with KCNE1 or KCNE2, and that this heteromultimerization regulates Inward rectifier potassium channel activity. Interacts with CANX. The core-glycosylated, but not the fully glycosylated form interacts with RNF207. Interacts with NDFIP1 and NDFIP2; this interaction decreases the cell membrane expression by targeting KCNH2, through interaction with NEDD4L, for the degradation through the multivesicular bodies (MVBs)-lysosomal pathway. Phosphorylated on serine and threonine residues. Phosphorylation by PKA inhibits ion conduction.

The protein localises to the cell membrane. It carries out the reaction K(+)(in) = K(+)(out). Functionally, pore-forming (alpha) subunit of voltage-gated inwardly rectifying potassium channel. Characterized by unusual gating kinetics by producing relatively small outward currents during membrane depolarization and large inward currents during subsequent repolarization which reflect a rapid inactivation during depolarization and quick recovery from inactivation but slow deactivation (closing) during repolarization. Channel properties are modulated by cAMP and subunit assembly. Forms a stable complex with KCNE1 or KCNE2, and that this heteromultimerization regulates inward rectifier potassium channel activity. The sequence is that of Voltage-gated inwardly rectifying potassium channel KCNH2 from Sus scrofa (Pig).